A 145-amino-acid chain; its full sequence is Large ribosomal subunit protein uL13 (145 aa).

This sequence belongs to the universal ribosomal protein uL13 family. In terms of assembly, part of the 50S ribosomal subunit.

This protein is one of the early assembly proteins of the 50S ribosomal subunit, although it is not seen to bind rRNA by itself. It is important during the early stages of 50S assembly. The polypeptide is Large ribosomal subunit protein uL13 (Bacillus licheniformis (strain ATCC 14580 / DSM 13 / JCM 2505 / CCUG 7422 / NBRC 12200 / NCIMB 9375 / NCTC 10341 / NRRL NRS-1264 / Gibson 46)).